The primary structure comprises 284 residues: D-tagatose-1,6-bisphosphate aldolase subunit GatY (284 aa).

Catalysis depends on D82, which acts as the Proton donor. Residues H83 and H180 each contribute to the Zn(2+) site. G181 lines the dihydroxyacetone phosphate pocket. H208 lines the Zn(2+) pocket. Dihydroxyacetone phosphate-binding positions include 209-211 and 230-233; these read GAS and NVAT.

This sequence belongs to the class II fructose-bisphosphate aldolase family. TagBP aldolase GatY subfamily. As to quaternary structure, forms a complex with GatZ. Zn(2+) serves as cofactor.

It catalyses the reaction D-tagatofuranose 1,6-bisphosphate = D-glyceraldehyde 3-phosphate + dihydroxyacetone phosphate. It participates in carbohydrate metabolism; D-tagatose 6-phosphate degradation; D-glyceraldehyde 3-phosphate and glycerone phosphate from D-tagatose 6-phosphate: step 2/2. In terms of biological role, catalytic subunit of the tagatose-1,6-bisphosphate aldolase GatYZ, which catalyzes the reversible aldol condensation of dihydroxyacetone phosphate (DHAP or glycerone-phosphate) with glyceraldehyde 3-phosphate (G3P) to produce tagatose 1,6-bisphosphate (TBP). Requires GatZ subunit for full activity and stability. Is involved in the catabolism of galactitol. In Salmonella typhi, this protein is D-tagatose-1,6-bisphosphate aldolase subunit GatY.